Reading from the N-terminus, the 183-residue chain is Ferredoxin-2, mitochondrial (183 aa).

The transit peptide at 1–52 directs the protein to the mitochondrion; that stretch reads MAASMARGGVSARVLLQAARGTWWNRPGGTSGSGEGVALGTTRKFQATGSRP. The disordered stretch occupies residues 45 to 65; the sequence is FQATGSRPAGEEDAGGPERPG. Residues 68-170 form the 2Fe-2S ferredoxin-type domain; sequence VNVVFVDRSG…GAEFTLPKIT (103 aa). The [2Fe-2S] cluster site is built by Cys-105, Cys-111, Cys-114, and Cys-151.

This sequence belongs to the adrenodoxin/putidaredoxin family. Component of the mitochondrial core iron-sulfur cluster (ISC) complex composed of NFS1, LYRM4, NDUFAB1, ISCU, FXN, and FDX2; this complex is a heterohexamer containing two copies of each monomer. Form a heterodimer complex with NFS1. Interacts (in both their reduced and oxidized states) with the cysteine desulfurase complex; this interaction stimulates cysteine desulfurase activity, and serves as a reductant for Fe-S cluster assembly. The cofactor is [2Fe-2S] cluster. Widely expressed, with highest levels in testis, kidney and brain (at protein level). Expressed in muscle (at protein level). Expressed in fibroblasts (at protein level).

It localises to the mitochondrion. The protein localises to the mitochondrion matrix. Functionally, electron donor, of the core iron-sulfur cluster (ISC) assembly complex, that acts to reduce the persulfide into sulfide during [2Fe-2S] clusters assembly on the scaffolding protein ISCU. The core iron-sulfur cluster (ISC) assembly complex is involved in the de novo synthesis of a [2Fe-2S] cluster, the first step of the mitochondrial iron-sulfur protein biogenesis. This process is initiated by the cysteine desulfurase complex (NFS1:LYRM4:NDUFAB1) that produces persulfide which is delivered on the scaffold protein ISCU in a FXN-dependent manner. Then this complex is stabilized by FDX2 which provides reducing equivalents to accomplish the [2Fe-2S] cluster assembly. Finally, the [2Fe-2S] cluster is transferred from ISCU to chaperone proteins, including HSCB, HSPA9 and GLRX5. Essential for coenzyme Q biosynthesis: together with FDXR, transfers the electrons required for the hydroxylation reaction performed by COQ6. This is Ferredoxin-2, mitochondrial from Homo sapiens (Human).